The chain runs to 340 residues: tRNA N6-adenosine threonylcarbamoyltransferase (340 aa).

Fe cation is bound by residues histidine 115 and histidine 119. Residues 138 to 142, aspartate 171, glycine 184, aspartate 188, and asparagine 278 contribute to the substrate site; that span reads VVSGG. Aspartate 306 is a Fe cation binding site.

Belongs to the KAE1 / TsaD family. It depends on Fe(2+) as a cofactor.

Its subcellular location is the cytoplasm. It catalyses the reaction L-threonylcarbamoyladenylate + adenosine(37) in tRNA = N(6)-L-threonylcarbamoyladenosine(37) in tRNA + AMP + H(+). Functionally, required for the formation of a threonylcarbamoyl group on adenosine at position 37 (t(6)A37) in tRNAs that read codons beginning with adenine. Is involved in the transfer of the threonylcarbamoyl moiety of threonylcarbamoyl-AMP (TC-AMP) to the N6 group of A37, together with TsaE and TsaB. TsaD likely plays a direct catalytic role in this reaction. This chain is tRNA N6-adenosine threonylcarbamoyltransferase, found in Clostridium botulinum (strain 657 / Type Ba4).